The following is a 511-amino-acid chain: Adenosine deaminase 2 (511 aa).

A signal peptide spans 1–29 (MLVDGPSEWPALRFLLLAVAMSFFGSALS). The segment at 30–100 (IDETRAHLLL…HLIERSQVFN (71 aa)) is dimerization. 2 residues coordinate Zn(2+): histidine 112 and histidine 114. Aspartate 115 is a substrate binding site. N-linked (GlcNAc...) asparagine glycosylation occurs at asparagine 127. A PRB domain region spans residues 127–185 (NVTYRPHCHICFTPKGIMQFRFAHPTPRTSEKCSKWILLEDYRKRVQNVTEFDDSLLRN). An intrachain disulfide couples cysteine 137 to cysteine 159. Residues asparagine 174 and asparagine 185 are each glycosylated (N-linked (GlcNAc...) asparagine). Substrate-binding positions include 204–211 (WSKFETIF), histidine 293, and glycine 326. Histidine 356 contributes to the Zn(2+) binding site. The Proton donor role is filled by glutamate 359. Asparagine 378 carries N-linked (GlcNAc...) asparagine glycosylation. Histidine 384 (proton acceptor) is an active-site residue. Aspartate 441 contacts Zn(2+). Aspartate 442 contributes to the substrate binding site.

The protein belongs to the metallo-dependent hydrolases superfamily. Adenosine and AMP deaminases family. ADGF subfamily. Homodimer. Interacts with adenosine receptors. Binds heparin. Zn(2+) is required as a cofactor.

It is found in the secreted. It carries out the reaction adenosine + H2O + H(+) = inosine + NH4(+). Functionally, adenosine deaminase that may contribute to the degradation of extracellular adenosine, a signaling molecule that controls a variety of cellular responses. Requires elevated adenosine levels for optimal enzyme activity. Binds to cell surfaces via proteoglycans and may play a role in the regulation of cell proliferation and differentiation, independently of its enzyme activity. The chain is Adenosine deaminase 2 from Pongo abelii (Sumatran orangutan).